The following is a 201-amino-acid chain: MEKFTKIQGIAAPMPLVNIDTDMIIPKVFLKSIQRTGFGKNLFDEMRYNRDGTEIPDFVLNKPQYRDAEILVAGDNFGCGSSREHAPWAIADFGIKCIISTSFADIFFNNSFKNGILPIVLPQEQVDILMKDAEKGANARMTVDLEAQEITTSDGEVIPFEVDAFKKHCLLNGLDDIGLTMEKAAAIDTFEAQAAQARPWV.

The protein belongs to the LeuD family. LeuD type 1 subfamily. In terms of assembly, heterodimer of LeuC and LeuD.

The catalysed reaction is (2R,3S)-3-isopropylmalate = (2S)-2-isopropylmalate. The protein operates within amino-acid biosynthesis; L-leucine biosynthesis; L-leucine from 3-methyl-2-oxobutanoate: step 2/4. In terms of biological role, catalyzes the isomerization between 2-isopropylmalate and 3-isopropylmalate, via the formation of 2-isopropylmaleate. This chain is 3-isopropylmalate dehydratase small subunit, found in Ruegeria pomeroyi (strain ATCC 700808 / DSM 15171 / DSS-3) (Silicibacter pomeroyi).